A 441-amino-acid polypeptide reads, in one-letter code: Serine carboxypeptidase-like 4 (441 aa).

The first 29 residues, 1–29, serve as a signal peptide directing secretion; it reads MANNNVYSVLKSLLLLLHLVFLSKQHVDS. Cystine bridges form between Cys88/Cys331, Cys252/Cys266, and Cys290/Cys297. Asn109 is a glycosylation site (N-linked (GlcNAc...) asparagine). Ser184 is a catalytic residue. Asn350 is a glycosylation site (N-linked (GlcNAc...) asparagine). Asp366 is an active-site residue. The N-linked (GlcNAc...) asparagine glycan is linked to Asn382. Residue His419 is part of the active site.

Belongs to the peptidase S10 family. Ubiquitous.

It localises to the secreted. In terms of biological role, probable carboxypeptidase. The sequence is that of Serine carboxypeptidase-like 4 (SCPL4) from Arabidopsis thaliana (Mouse-ear cress).